A 400-amino-acid chain; its full sequence is DNA primase large subunit PriL (400 aa).

Cys247, Cys356, Cys367, and Cys373 together coordinate [4Fe-4S] cluster.

This sequence belongs to the eukaryotic-type primase large subunit family. In terms of assembly, heterodimer of a small subunit (PriS) and a large subunit (PriL). [4Fe-4S] cluster is required as a cofactor.

Functionally, regulatory subunit of DNA primase, an RNA polymerase that catalyzes the synthesis of short RNA molecules used as primers for DNA polymerase during DNA replication. Stabilizes and modulates the activity of the small subunit, increasing the rate of DNA synthesis, and conferring RNA synthesis capability. The DNA polymerase activity may enable DNA primase to also catalyze primer extension after primer synthesis. May also play a role in DNA repair. The chain is DNA primase large subunit PriL from Thermococcus kodakarensis (strain ATCC BAA-918 / JCM 12380 / KOD1) (Pyrococcus kodakaraensis (strain KOD1)).